Reading from the N-terminus, the 830-residue chain is V-type proton ATPase 116 kDa subunit a 3 (830 aa).

At 1–385 (MGSMFRSEEV…DAYGVGRYQE (385 aa)) the chain is on the cytoplasmic side. A disordered region spans residues 139-158 (QLAAAHTDGASERTPLLQAP). Residues 386–404 (VNPAPYTIITFPFLFAVMF) traverse the membrane as a helical segment. Topologically, residues 405–406 (GD) are vacuolar. The chain crosses the membrane as a helical span at residues 407-423 (VGHGLLMFLFALAMVLA). The Cytoplasmic portion of the chain corresponds to 424 to 438 (ENRPAVKAAQNEIWQ). A helical membrane pass occupies residues 439-468 (TFFRGRYLLLLMGLFSIYTGFIYNECFSRA). The Vacuolar segment spans residues 469–532 (TSIFPSGWSV…AANHLSFLNS (64 aa)). The helical transmembrane segment at 533–552 (FKMKMSVILGVVHMAFGVVL) threads the bilayer. The Cytoplasmic portion of the chain corresponds to 553 to 570 (GVFNHVHFGQRHRLLLET). A helical membrane pass occupies residues 571 to 591 (LPELTFLLGLFGYLVFLVIYK). The Vacuolar segment spans residues 592–635 (WLCVWAARAASAPSILIHFINMFLFSHSPSNRLLYPRQEVVQAT). The chain crosses the membrane as a helical span at residues 636–655 (LVVLALAMVPILLLGTPLHL). Over 656 to 720 (LHRHRRRLRR…EVLMHQAIHT (65 aa)) the chain is Cytoplasmic. A disordered region spans residues 681–701 (LPDASVNGWSSDEEKAGGLDD). Residues 721 to 745 (IEFCLGCVSNTASYLRLWALSLAHA) traverse the membrane as a helical segment. The Vacuolar segment spans residues 746–766 (QLSEVLWAMVMRIGLGLGREV). The chain crosses the membrane as a helical span at residues 767–807 (GVAAVVLVPIFAAFAVMTVAILLVMEGLSAFLHALRLHWVE). The Cytoplasmic segment spans residues 808–830 (FQNKFYSGTGYKLSPFTFAATDD).

This sequence belongs to the V-ATPase 116 kDa subunit family. V-ATPase is a heteromultimeric enzyme made up of two complexes: the ATP-hydrolytic V1 complex and the proton translocation V0 complex. The V1 complex consists of three catalytic AB heterodimers that form a heterohexamer, three peripheral stalks each consisting of EG heterodimers, one central rotor including subunits D and F, and the regulatory subunits C and H. The proton translocation complex V0 consists of the proton transport subunit a, a ring of proteolipid subunits c9c'', rotary subunit d, subunits e and f, and the accessory subunits ATP6AP1/Ac45 and ATP6AP2/PRR. In terms of tissue distribution, isoform long is highly expressed in osteoclastomas. Isoform short is highly expressed in thymus.

It is found in the membrane. In terms of biological role, subunit of the V0 complex of vacuolar(H+)-ATPase (V-ATPase), a multisubunit enzyme composed of a peripheral complex (V1) that hydrolyzes ATP and a membrane integral complex (V0) that translocates protons. V-ATPase is responsible for acidifying and maintaining the pH of intracellular compartments and in some cell types, is targeted to the plasma membrane, where it is responsible for acidifying the extracellular environment. Seems to be directly involved in T-cell activation. This is V-type proton ATPase 116 kDa subunit a 3 (TCIRG1) from Homo sapiens (Human).